Here is a 310-residue protein sequence, read N- to C-terminus: 4-diphosphocytidyl-2-C-methyl-D-erythritol kinase (310 aa).

The active site involves K10. P102–A112 contacts ATP. The active site involves D144. Residues T289–A310 form a disordered region.

This sequence belongs to the GHMP kinase family. IspE subfamily.

The catalysed reaction is 4-CDP-2-C-methyl-D-erythritol + ATP = 4-CDP-2-C-methyl-D-erythritol 2-phosphate + ADP + H(+). Its pathway is isoprenoid biosynthesis; isopentenyl diphosphate biosynthesis via DXP pathway; isopentenyl diphosphate from 1-deoxy-D-xylulose 5-phosphate: step 3/6. In terms of biological role, catalyzes the phosphorylation of the position 2 hydroxy group of 4-diphosphocytidyl-2C-methyl-D-erythritol. In Cutibacterium acnes (strain DSM 16379 / KPA171202) (Propionibacterium acnes), this protein is 4-diphosphocytidyl-2-C-methyl-D-erythritol kinase.